The primary structure comprises 128 residues: MSNVPAELKYTKSHEWIRVEADGSLTIGVTDHAQEALGDVVFLELPEAGRQLAAGEACAVIESVKAASDIYAPVDGEVIASNQDAVDAPESVNADAYAAWLFKLKPANAGDVAALLDAQGYQAEIANA.

One can recognise a Lipoyl-binding domain in the interval 24–105; the sequence is SLTIGVTDHA…AYAAWLFKLK (82 aa). N6-lipoyllysine is present on lysine 65.

This sequence belongs to the GcvH family. The glycine cleavage system is composed of four proteins: P, T, L and H. Requires (R)-lipoate as cofactor.

Its function is as follows. The glycine cleavage system catalyzes the degradation of glycine. The H protein shuttles the methylamine group of glycine from the P protein to the T protein. This chain is Glycine cleavage system H protein, found in Aromatoleum aromaticum (strain DSM 19018 / LMG 30748 / EbN1) (Azoarcus sp. (strain EbN1)).